We begin with the raw amino-acid sequence, 448 residues long: Acyl-lipid (9-3)-desaturase (448 aa).

Residues 6 to 90 (KKYITSDELK…LKDYSVSEVS (85 aa)) form the Cytochrome b5 heme-binding domain. Heme contacts are provided by H41 and H64. Helical transmembrane passes span 112-132 (IMFA…YGVL) and 137-157 (VLVH…SGWI). The Histidine box-1 signature appears at 159–163 (HDAGH). A helical transmembrane segment spans residues 172-192 (LNKFMGIFAANCLSGISIGWW). A Histidine box-2 motif is present at residues 196 to 200 (HNAHH). 3 helical membrane passes run 212 to 232 (LQYI…TSHF), 254 to 274 (FYPI…IMLL), and 286 to 306 (LLGC…LPNW). Positions 373 to 377 (QIEHH) match the Histidine box-3 motif.

This sequence belongs to the fatty acid desaturase type 1 family.

Its subcellular location is the endoplasmic reticulum membrane. It carries out the reaction (9Z,12Z,15Z)-octadecatrienoyl-containing glycerolipid + 2 Fe(II)-[cytochrome b5] + O2 + 2 H(+) = (6Z,9Z,12Z,15Z)-octadecatetraenoyl-containing glycerolipid + 2 Fe(III)-[cytochrome b5] + 2 H2O. The enzyme catalyses a (9Z,12Z)-octadecadienoyl-containing glycerolipid + 2 Fe(II)-[cytochrome b5] + O2 + 2 H(+) = (6Z,9Z,12Z)-octadecatrienoyl-containing glycerolipid + 2 Fe(III)-[cytochrome b5] + 2 H2O. Its pathway is lipid metabolism; polyunsaturated fatty acid biosynthesis. In terms of biological role, fatty acid desaturase able to introduce a delta(6)-double bond into delta(9)-unsaturated fatty-acid substrates. Can use both linoleic acid (18:2(9Z,12Z)) and alpha-linolenic acid (18:3(9Z,12Z,15Z)) as substrates. The sequence is that of Acyl-lipid (9-3)-desaturase from Borago officinalis (Bourrache).